The sequence spans 461 residues: Cysteine--tRNA ligase (461 aa).

Residue Cys28 coordinates Zn(2+). The 'HIGH' region signature appears at 30 to 40 (ITIYDLCHIGH). 3 residues coordinate Zn(2+): Cys209, His234, and Glu238. The 'KMSKS' region signature appears at 266–270 (KMSKS). Position 269 (Lys269) interacts with ATP.

It belongs to the class-I aminoacyl-tRNA synthetase family. Monomer. Zn(2+) is required as a cofactor.

It is found in the cytoplasm. The catalysed reaction is tRNA(Cys) + L-cysteine + ATP = L-cysteinyl-tRNA(Cys) + AMP + diphosphate. This is Cysteine--tRNA ligase from Yersinia enterocolitica serotype O:8 / biotype 1B (strain NCTC 13174 / 8081).